We begin with the raw amino-acid sequence, 444 residues long: Tol-Pal system protein TolB (444 aa).

The N-terminal stretch at 1 to 19 is a signal peptide; the sequence is MRNIIYFILSLLFSFKGYA.

This sequence belongs to the TolB family. As to quaternary structure, the Tol-Pal system is composed of five core proteins: the inner membrane proteins TolA, TolQ and TolR, the periplasmic protein TolB and the outer membrane protein Pal. They form a network linking the inner and outer membranes and the peptidoglycan layer.

The protein resides in the periplasm. Its function is as follows. Part of the Tol-Pal system, which plays a role in outer membrane invagination during cell division and is important for maintaining outer membrane integrity. The sequence is that of Tol-Pal system protein TolB from Rickettsia felis (strain ATCC VR-1525 / URRWXCal2) (Rickettsia azadi).